Reading from the N-terminus, the 356-residue chain is sn-glycerol-3-phosphate import ATP-binding protein UgpC (356 aa).

Residues 4–235 form the ABC transporter domain; sequence LKLQAVTKSW…PASLFVASFI (232 aa). 37 to 44 is an ATP binding site; the sequence is GPSGCGKS.

Belongs to the ABC transporter superfamily. sn-glycerol-3-phosphate importer (TC 3.A.1.1.3) family. In terms of assembly, the complex is composed of two ATP-binding proteins (UgpC), two transmembrane proteins (UgpA and UgpE) and a solute-binding protein (UgpB).

It is found in the cell inner membrane. It carries out the reaction sn-glycerol 3-phosphate(out) + ATP + H2O = sn-glycerol 3-phosphate(in) + ADP + phosphate + H(+). Functionally, part of the ABC transporter complex UgpBAEC involved in sn-glycerol-3-phosphate (G3P) import. Responsible for energy coupling to the transport system. The protein is sn-glycerol-3-phosphate import ATP-binding protein UgpC of Shigella boydii serotype 4 (strain Sb227).